A 535-amino-acid polypeptide reads, in one-letter code: Sodium/hydrogen exchanger 9B2 (535 aa).

Residues M1 to E14 show a composition bias toward basic and acidic residues. Positions M1–R70 are disordered. At M1–R85 the chain is on the cytoplasmic side. Polar residues-rich tracts occupy residues S16–G34 and T46–M58. Residues V86 to V103 form a helical membrane-spanning segment. The Extracellular portion of the chain corresponds to T104–G112. The helical transmembrane segment at N113 to G132 threads the bilayer. Residues L133–P143 are Cytoplasmic-facing. A helical transmembrane segment spans residues P144–V160. Residues I161–K170 lie on the Extracellular side of the membrane. A helical membrane pass occupies residues W171–G188. At L189–L199 the chain is on the cytoplasmic side. The chain crosses the membrane as a helical span at residues K200–M226. Residues G227–W232 are Extracellular-facing. A helical membrane pass occupies residues G233–G241. The Cytoplasmic portion of the chain corresponds to A242–L269. V243, G274, D277, and D278 together coordinate Na(+). A helical transmembrane segment spans residues L270–L289. The Extracellular segment spans residues G290–V299. The chain crosses the membrane as a helical span at residues F300 to I323. Residues Q324–R338 lie on the Cytoplasmic side of the membrane. A helical transmembrane segment spans residues A339 to F356. The Extracellular portion of the chain corresponds to G357–G360. Residues S361–L372 traverse the membrane as a helical segment. Over A373–A389 the chain is Cytoplasmic. The helical transmembrane segment at V390–T410 threads the bilayer. Residues A411–T416 lie on the Extracellular side of the membrane. Residues I417–V439 traverse the membrane as a helical segment. Residues C440 to A460 lie on the Cytoplasmic side of the membrane. The helical transmembrane segment at T461 to D472 threads the bilayer. The Extracellular segment spans residues T473–Y485. Residues G486–I508 form a helical membrane-spanning segment. The Cytoplasmic portion of the chain corresponds to G509 to V535.

This sequence belongs to the monovalent cation:proton antiporter 1 (CPA1) transporter (TC 2.A.36) family. As to quaternary structure, homodimer; dimerization is essential for SLC9B2 activity. Lipids seem to play a role in the stabilization of the dimerization subdomain.

The protein localises to the cell membrane. It is found in the mitochondrion membrane. Its subcellular location is the endosome membrane. It localises to the recycling endosome membrane. The protein resides in the lysosome membrane. The protein localises to the cytoplasmic vesicle. It is found in the secretory vesicle. Its subcellular location is the synaptic vesicle membrane. It localises to the cell projection. The protein resides in the cilium. The protein localises to the flagellum membrane. It is found in the basolateral cell membrane. Its subcellular location is the apical cell membrane. It carries out the reaction Li(+)(out) + H(+)(in) = Li(+)(in) + H(+)(out). The enzyme catalyses Li(+)(in) + Na(+)(out) = Li(+)(out) + Na(+)(in). The catalysed reaction is Na(+)(in) + H(+)(out) = Na(+)(out) + H(+)(in). Its activity is regulated as follows. Allosterically inhibited by the N-terminal domain. Inhibited by phloretin. Its function is as follows. Electroneutral Na(+) Li(+)/H(+) antiporter that extrudes Na(+) or Li(+) in exchange for external protons across the membrane. Uses the proton gradient/membrane potential to extrude sodium. Contributes to the regulation of intracellular pH and sodium homeostasis. Also able to mediate Na(+)/Li(+) antiporter activity in kidney. May play a physiological role in renal tubular function and blood pressure homeostasis. Plays an important role for insulin secretion and clathrin-mediated endocytosis in beta-cells. Involved in sperm motility and fertility. It is controversial whether SLC9B2 plays a role in osteoclast differentiation or not. In Bison bison bison (North American plains bison), this protein is Sodium/hydrogen exchanger 9B2 (SLC9B2).